We begin with the raw amino-acid sequence, 159 residues long: Immunoglobulin J chain (159 aa).

Residues M1–T21 form the signal peptide. Disulfide bonds link C34/C123, C93/C113, and C131/C156. N70 carries N-linked (GlcNAc...) (complex) asparagine glycosylation.

In terms of assembly, part of the secretory IgA (sIgA) complex that consists of two, four or five IgA monomers, and two additional non-Ig polypeptides, namely the JCHAIN and the secretory component (the proteolytic product of PIGR). Part of the secretory IgM (sIgM) complex that consist of five IgM monomers, and two additional non-Ig polypeptides, namely the JCHAIN and the secretory component (the proteolytic product of PIGR). JCHAIN-containing IgM interacts (via CH4 domain) with FCRM (via Ig-like domain).

Its subcellular location is the secreted. In terms of biological role, serves to link two monomer units of either IgM or IgA. In the case of IgM, the J chain-joined dimer is a nucleating unit for the IgM pentamer, and in the case of IgA it induces dimers and/or larger polymers. It also helps to bind these immunoglobulins to secretory component. This Mus musculus (Mouse) protein is Immunoglobulin J chain.